Here is a 151-residue protein sequence, read N- to C-terminus: Deoxyuridine 5'-triphosphate nucleotidohydrolase (151 aa).

Substrate is bound by residues 70 to 72 (RSG), asparagine 83, 87 to 89 (LID), and methionine 97.

Belongs to the dUTPase family. It depends on Mg(2+) as a cofactor.

The enzyme catalyses dUTP + H2O = dUMP + diphosphate + H(+). The protein operates within pyrimidine metabolism; dUMP biosynthesis; dUMP from dCTP (dUTP route): step 2/2. In terms of biological role, this enzyme is involved in nucleotide metabolism: it produces dUMP, the immediate precursor of thymidine nucleotides and it decreases the intracellular concentration of dUTP so that uracil cannot be incorporated into DNA. The protein is Deoxyuridine 5'-triphosphate nucleotidohydrolase of Pseudomonas putida (strain ATCC 47054 / DSM 6125 / CFBP 8728 / NCIMB 11950 / KT2440).